A 502-amino-acid chain; its full sequence is Probable cytosol aminopeptidase (502 aa).

2 residues coordinate Mn(2+): lysine 269 and aspartate 274. Residue lysine 281 is part of the active site. Positions 292, 351, and 353 each coordinate Mn(2+). Arginine 355 is an active-site residue.

The protein belongs to the peptidase M17 family. The cofactor is Mn(2+).

It localises to the cytoplasm. It catalyses the reaction Release of an N-terminal amino acid, Xaa-|-Yaa-, in which Xaa is preferably Leu, but may be other amino acids including Pro although not Arg or Lys, and Yaa may be Pro. Amino acid amides and methyl esters are also readily hydrolyzed, but rates on arylamides are exceedingly low.. The enzyme catalyses Release of an N-terminal amino acid, preferentially leucine, but not glutamic or aspartic acids.. Its function is as follows. Presumably involved in the processing and regular turnover of intracellular proteins. Catalyzes the removal of unsubstituted N-terminal amino acids from various peptides. The chain is Probable cytosol aminopeptidase from Shewanella frigidimarina (strain NCIMB 400).